We begin with the raw amino-acid sequence, 337 residues long: NADH-quinone oxidoreductase subunit H (337 aa).

9 helical membrane passes run 9-29, 50-70, 82-102, 115-135, 161-181, 186-206, 245-265, 273-293, and 313-333; these read GIPL…LLLV, PNVV…KFVF, GIFL…WAVI, VGIL…IMAG, IGFV…TAIV, TIWY…SALA, SILL…LPPI, VPGV…FAMV, and FLPI…GFDI.

The protein belongs to the complex I subunit 1 family. In terms of assembly, NDH-1 is composed of 14 different subunits. Subunits NuoA, H, J, K, L, M, N constitute the membrane sector of the complex.

It localises to the cell inner membrane. It catalyses the reaction a quinone + NADH + 5 H(+)(in) = a quinol + NAD(+) + 4 H(+)(out). Functionally, NDH-1 shuttles electrons from NADH, via FMN and iron-sulfur (Fe-S) centers, to quinones in the respiratory chain. The immediate electron acceptor for the enzyme in this species is believed to be ubiquinone. Couples the redox reaction to proton translocation (for every two electrons transferred, four hydrogen ions are translocated across the cytoplasmic membrane), and thus conserves the redox energy in a proton gradient. This subunit may bind ubiquinone. The protein is NADH-quinone oxidoreductase subunit H of Parvibaculum lavamentivorans (strain DS-1 / DSM 13023 / NCIMB 13966).